The primary structure comprises 205 residues: Cytochrome c biogenesis ATP-binding export protein CcmA 2 (205 aa).

One can recognise an ABC transporter domain in the interval 2–205 (LEARDLHCER…LALTGGEAGL (204 aa)). 34–41 (GGNGAGKT) contributes to the ATP binding site.

This sequence belongs to the ABC transporter superfamily. CcmA exporter (TC 3.A.1.107) family. The complex is composed of two ATP-binding proteins (CcmA) and two transmembrane proteins (CcmB).

Its subcellular location is the cell inner membrane. The catalysed reaction is heme b(in) + ATP + H2O = heme b(out) + ADP + phosphate + H(+). In terms of biological role, part of the ABC transporter complex CcmAB involved in the biogenesis of c-type cytochromes; once thought to export heme, this seems not to be the case, but its exact role is uncertain. Responsible for energy coupling to the transport system. This is Cytochrome c biogenesis ATP-binding export protein CcmA 2 from Salmonella paratyphi A (strain ATCC 9150 / SARB42).